The primary structure comprises 181 residues: MLRRPEKEQLVQELTSEFQNSSLVLFTDFKGLTVAQMTNLRRALREKLGSGARLTVVKNTLLKMALKNSGYDVDSHESSFFGPTAVLYVTEGDPVEAIKVFYNFVKENKGTPVCKGLFLERKFFAGEQLEDLSKLPSRDQLIAMVVGGIQAPIRGLVNSLAGVLRSVLYALNAIKEQKEKQ.

The protein belongs to the universal ribosomal protein uL10 family. Part of the ribosomal stalk of the 50S ribosomal subunit. The N-terminus interacts with L11 and the large rRNA to form the base of the stalk. The C-terminus forms an elongated spine to which L12 dimers bind in a sequential fashion forming a multimeric L10(L12)X complex.

Forms part of the ribosomal stalk, playing a central role in the interaction of the ribosome with GTP-bound translation factors. This Fervidobacterium nodosum (strain ATCC 35602 / DSM 5306 / Rt17-B1) protein is Large ribosomal subunit protein uL10.